Here is a 361-residue protein sequence, read N- to C-terminus: Phosphoserine aminotransferase (361 aa).

Position 43 (Arg-43) interacts with L-glutamate. Pyridoxal 5'-phosphate-binding positions include 77-78 (AS), Trp-103, Thr-153, Asp-173, and Gln-196. Lys-197 bears the N6-(pyridoxal phosphate)lysine mark. Residue 238 to 239 (NT) participates in pyridoxal 5'-phosphate binding.

This sequence belongs to the class-V pyridoxal-phosphate-dependent aminotransferase family. SerC subfamily. In terms of assembly, homodimer. The cofactor is pyridoxal 5'-phosphate.

The protein resides in the cytoplasm. It carries out the reaction O-phospho-L-serine + 2-oxoglutarate = 3-phosphooxypyruvate + L-glutamate. The catalysed reaction is 4-(phosphooxy)-L-threonine + 2-oxoglutarate = (R)-3-hydroxy-2-oxo-4-phosphooxybutanoate + L-glutamate. It functions in the pathway amino-acid biosynthesis; L-serine biosynthesis; L-serine from 3-phospho-D-glycerate: step 2/3. The protein operates within cofactor biosynthesis; pyridoxine 5'-phosphate biosynthesis; pyridoxine 5'-phosphate from D-erythrose 4-phosphate: step 3/5. Catalyzes the reversible conversion of 3-phosphohydroxypyruvate to phosphoserine and of 3-hydroxy-2-oxo-4-phosphonooxybutanoate to phosphohydroxythreonine. In Pseudomonas putida (strain ATCC 47054 / DSM 6125 / CFBP 8728 / NCIMB 11950 / KT2440), this protein is Phosphoserine aminotransferase.